We begin with the raw amino-acid sequence, 62 residues long: MARYRRHSRSRSRSRYRRRRRRRSRGRRRRTYRRSRRHSRRRRGRRRGYSRRRYSRRGRRRY.

Positions 1-62 (MARYRRHSRS…RYSRRGRRRY (62 aa)) are disordered.

This sequence belongs to the protamine P1 family. Testis.

Its subcellular location is the nucleus. The protein resides in the chromosome. Protamines substitute for histones in the chromatin of sperm during the haploid phase of spermatogenesis. They compact sperm DNA into a highly condensed, stable and inactive complex. The chain is Sperm protamine P1 (PRM1) from Neophascogale lorentzii (Long-clawed marsupial mouse).